The primary structure comprises 368 residues: tRNA(Met) cytidine acetate ligase (368 aa).

ATP-binding positions include 7 to 20, Gly-96, Asn-152, and Arg-175; that span reads IAEFNPFHNGHKYL.

Belongs to the TmcAL family.

Its subcellular location is the cytoplasm. The enzyme catalyses cytidine(34) in elongator tRNA(Met) + acetate + ATP = N(4)-acetylcytidine(34) in elongator tRNA(Met) + AMP + diphosphate. Its function is as follows. Catalyzes the formation of N(4)-acetylcytidine (ac(4)C) at the wobble position of elongator tRNA(Met), using acetate and ATP as substrates. First activates an acetate ion to form acetyladenylate (Ac-AMP) and then transfers the acetyl group to tRNA to form ac(4)C34. This is tRNA(Met) cytidine acetate ligase from Streptococcus pyogenes serotype M5 (strain Manfredo).